Consider the following 244-residue polypeptide: MSSESKGIPIPRSDSNKTSDVSSWEEDYELISLGSSQDALQRSGIRSAHGDSGYASSPLRMEHLSSSTIIINNQLKKIDVNESIPENSTLHNKYELGAVESSTSSLSLLQSKEEDDSSNWETEDSESAVEEAELPTIFEGKTVISPSSSGTDHSEAVEYTVPTAPPIPDLRFQQSYLQSIQRANGSAFLVALITLRDHVLYPFLSGGMWVFVRHIFQFLKLQEKGFHFGQSLRRNLGLFSTFKD.

Residues 1–24 (MSSESKGIPIPRSDSNKTSDVSSW) are disordered. Residues 1–198 (MSSESKGIPI…LVALITLRDH (198 aa)) are Cytoplasmic-facing. Residues 28-31 (YELI) carry the atg8 interacting motif (AIM) motif. The segment at 105-131 (SLSLLQSKEEDDSSNWETEDSESAVEE) is disordered. Positions 113-131 (EEDDSSNWETEDSESAVEE) are enriched in acidic residues. Positions 165 to 184 (PPIPDLRFQQSYLQSIQRAN) are involved in MIM complex binding. Required for normal vegetative cell population growth but is dispensable for mitophagy. Residues 199–215 (VLYPFLSGGMWVFVRHI) form a helical membrane-spanning segment. Residues 216–244 (FQFLKLQEKGFHFGQSLRRNLGLFSTFKD) lie on the Mitochondrial intermembrane side of the membrane.

As to quaternary structure, interacts (via N-terminal atg8 interacting motif) with atg8; the interaction is direct. Interacts with the mitochondrial outer import machinery (MIM) complex subunits mim1 and mim2.

The protein resides in the mitochondrion outer membrane. Its function is as follows. Mitophagy receptor that tethers atg8 to the mitochondrial outer membrane to promote selective autophagy. This chain is Mitophagy receptor atg43, found in Schizosaccharomyces pombe (strain 972 / ATCC 24843) (Fission yeast).